The primary structure comprises 261 residues: Aminoglycoside N(3)-acetyltransferase IV (261 aa).

It belongs to the antibiotic N-acetyltransferase family.

It carries out the reaction a 2-deoxystreptamine antibiotic + acetyl-CoA = an N(3)-acetyl-2-deoxystreptamine antibiotic + CoA + H(+). In terms of biological role, resistance to antibiotics containing the 2-deoxy-streptamine ring including gentamicin, kanamycin, tobramycin, neomycin and apramycin. The sequence is that of Aminoglycoside N(3)-acetyltransferase IV (aacC4) from Salmonella sp.